The chain runs to 305 residues: Endonuclease III-like protein 1 (305 aa).

The transit peptide at 1-28 (MNAAGVRMVVTRARSRGTGASLRRRGEK) directs the protein to the mitochondrion. Residues 1–83 (MNAAGVRMVV…HLQAPSWQPQ (83 aa)) form a disordered region. Ser-64 bears the Phosphoserine mark. The 25-residue stretch at 192–216 (RYDGDIPASVAELVALPGVGPKMAH) folds into the HhH domain. Lys-213 functions as the Nucleophile; for N-glycosylase activity in the catalytic mechanism. [4Fe-4S] cluster-binding residues include Cys-283, Cys-290, Cys-293, and Cys-299.

It belongs to the Nth/MutY family. In terms of assembly, interacts with YBX1. Interacts with ERCC5/XPG; the interaction stimulates NTHL1 activity and NTHL1 binding to its DNA substrate. [4Fe-4S] cluster is required as a cofactor.

The protein resides in the nucleus. Its subcellular location is the mitochondrion. The catalysed reaction is 2'-deoxyribonucleotide-(2'-deoxyribose 5'-phosphate)-2'-deoxyribonucleotide-DNA = a 3'-end 2'-deoxyribonucleotide-(2,3-dehydro-2,3-deoxyribose 5'-phosphate)-DNA + a 5'-end 5'-phospho-2'-deoxyribonucleoside-DNA + H(+). Functionally, bifunctional DNA N-glycosylase with associated apurinic/apyrimidinic (AP) lyase function that catalyzes the first step in base excision repair (BER), the primary repair pathway for the repair of oxidative DNA damage. The DNA N-glycosylase activity releases the damaged DNA base from DNA by cleaving the N-glycosidic bond, leaving an AP site. The AP lyase activity cleaves the phosphodiester bond 3' to the AP site by a beta-elimination. Primarily recognizes and repairs oxidative base damage of pyrimidines. This is Endonuclease III-like protein 1 from Bos taurus (Bovine).